A 525-amino-acid chain; its full sequence is MDPFSKSPDDDDLRPEAEAARRPQPQPQPREWRFAQVFGERAAGEDVQEVDIISAIEFDKSGDHLATGDRGGRVVLFERTDSRDSASRSELERQDYPIARHPEFRYKTEFQSHEPEFDYLKSLEIEEKINKIKWCQTANNALFLLSTNDKTIKYWKVQERKVKRISVMNLNTSQSSGNGTTSSSSSSSSRAILPNGGCSEKLYNFPNNDLLFPPGGCTSLRLPVVVTGQDLNLVPRCRRVYSHAHDYHINSISNNSDGETYISADDLRINLWNLEISNQSFNIVDVKPANMEDLTEVITCAEFHPTHCNTLAYSSSKGSIRLIDLRQSALCDNHAKLFEEHEAPGSRSFFTEIIASVSDIKFARDGRHILSRDYMTLKLWDINMDSGPVATFQVHEYLRPKLCDLYENDSIFDKFECCLSGDGLRVATGSYSNLFRVFGCTPGSAEATTLEASRNPMRRQVANPTRPARTLTSLTRAVRRGGENPGVDANGNSYDLSTKLLHLAWHPTENSIACAAANSLYMYYA.

The interval 1–31 (MDPFSKSPDDDDLRPEAEAARRPQPQPQPRE) is disordered. 2 WD repeats span residues 48–87 (QEVD…DSAS) and 124–165 (EIEE…VKRI). Residues 169-191 (NLNTSQSSGNGTTSSSSSSSSRA) are disordered. Residues 171–189 (NTSQSSGNGTTSSSSSSSS) are compositionally biased toward low complexity. 4 WD repeats span residues 244 to 282 (AHDY…QSFN), 293 to 333 (DLTE…LCDN), 352 to 390 (EIIA…GPVA), and 495 to 525 (DLST…MYYA).

Belongs to the phosphatase 2A regulatory subunit B family. As to quaternary structure, PP2A consists of a common heteromeric enzyme, composed of a catalytic subunit (subunits C), a constant regulatory subunit (subunit A), and a variety of regulatory subunits such as subunits B (the R2/B/PR55/B55, R3/B''/PR72/PR130/PR59 and R5/B'/B56 families).

Functionally, the B regulatory subunit may modulate substrate selectivity and catalytic activity, and may also direct the localization of the catalytic enzyme to a particular subcellular compartment. The protein is Serine/threonine protein phosphatase 2A 55 kDa regulatory subunit B beta isoform of Oryza sativa subsp. indica (Rice).